The following is a 244-amino-acid chain: 3-oxoacyl-[acyl-carrier-protein] reductase FabG (244 aa).

NADP(+) is bound by residues 9–12 (GASR), 60–61 (NV), and asparagine 87. Substrate is bound at residue serine 139. The active-site Proton acceptor is tyrosine 152. NADP(+) contacts are provided by residues 152 to 156 (YVATK) and isoleucine 185.

The protein belongs to the short-chain dehydrogenases/reductases (SDR) family. As to quaternary structure, homotetramer.

It catalyses the reaction a (3R)-hydroxyacyl-[ACP] + NADP(+) = a 3-oxoacyl-[ACP] + NADPH + H(+). The protein operates within lipid metabolism; fatty acid biosynthesis. In terms of biological role, catalyzes the NADPH-dependent reduction of beta-ketoacyl-ACP substrates to beta-hydroxyacyl-ACP products, the first reductive step in the elongation cycle of fatty acid biosynthesis. This is 3-oxoacyl-[acyl-carrier-protein] reductase FabG (fabG) from Staphylococcus epidermidis (strain ATCC 35984 / DSM 28319 / BCRC 17069 / CCUG 31568 / BM 3577 / RP62A).